Reading from the N-terminus, the 166-residue chain is NADH-quinone oxidoreductase subunit E (166 aa).

Residues C92, C97, C133, and C137 each contribute to the [2Fe-2S] cluster site.

It belongs to the complex I 24 kDa subunit family. As to quaternary structure, composed of 13 different subunits. Subunits NuoCD, E, F, and G constitute the peripheral sector of the complex. Requires [2Fe-2S] cluster as cofactor.

The catalysed reaction is a quinone + NADH + 5 H(+)(in) = a quinol + NAD(+) + 4 H(+)(out). NDH-1 shuttles electrons from NADH, via FMN and iron-sulfur (Fe-S) centers, to quinones in the respiratory chain. The immediate electron acceptor for the enzyme in this species is believed to be ubiquinone. Couples the redox reaction to proton translocation (for every two electrons transferred, four hydrogen ions are translocated across the cytoplasmic membrane), and thus conserves the redox energy in a proton gradient. This is NADH-quinone oxidoreductase subunit E (nuoE) from Salmonella typhi.